The chain runs to 309 residues: Putative S-adenosyl-L-methionine-dependent methyltransferase Mvan_0104 (309 aa).

S-adenosyl-L-methionine-binding positions include D134 and 163-164; that span reads DL.

Belongs to the UPF0677 family.

Exhibits S-adenosyl-L-methionine-dependent methyltransferase activity. The chain is Putative S-adenosyl-L-methionine-dependent methyltransferase Mvan_0104 from Mycolicibacterium vanbaalenii (strain DSM 7251 / JCM 13017 / BCRC 16820 / KCTC 9966 / NRRL B-24157 / PYR-1) (Mycobacterium vanbaalenii).